We begin with the raw amino-acid sequence, 490 residues long: 5'-3' exonuclease PLD3 (490 aa).

At 1 to 38 the chain is on the cytoplasmic side; sequence MKPKLMYQELKVPAEEPANELPMNEIEAWKAAEKKARW. A helical; Signal-anchor for type II membrane protein transmembrane segment spans residues 39–59; it reads VLLVLILAVVGFGALMTQLFL. At 60 to 490 the chain is on the lumenal side; the sequence is WEYGDLHLFG…DSVGNACRLL (431 aa). Cystine bridges form between Cys-77–Cys-239 and Cys-81–Cys-237. N-linked (GlcNAc...) asparagine glycans are attached at residues Asn-97 and Asn-132. A PLD phosphodiesterase 1 domain is found at 196–223; sequence THGVLHTKFWVVDQTHFYLGSANMDWRS. Residues His-201, Lys-203, and Asp-208 contribute to the active site. The active-site Proton donor is His-201. The phosphate site is built by His-201 and Lys-203. Asn-218 contacts phosphate. Asn-236, Asn-284, and Asn-387 each carry an N-linked (GlcNAc...) asparagine glycan. The cysteines at positions 366 and 487 are disulfide-linked. Residues 411 to 437 enclose the PLD phosphodiesterase 2 domain; that stretch reads YARVNHNKYMVTERATYIGTSNWSGNY. Phosphate is bound at residue His-416. His-416 functions as the Nucleophile in the catalytic mechanism. Phe-438 lines the Mg(2+) pocket.

The protein belongs to the phospholipase D family. Homodimer. Interacts with APP. Post-translationally, N-glycosylated. In terms of processing, proteolytically processed to a soluble form that is stable within endosomes and lysosomes. During transport through the secretory pathway becomes proteolysed by cysteine proteases, thereby releasing a stable soluble lysosomal lumenal polypeptide, whereas the transmembrane-bound fragment is rapidly degraded. Its transport route to lysosomes involves ubiquitination and the ESCRT complex. Ubiquitinated. Ubiquitination mediates sorting into lysosomes.

Its subcellular location is the endoplasmic reticulum membrane. It localises to the lysosome lumen. The protein resides in the early endosome membrane. The protein localises to the late endosome membrane. It is found in the golgi apparatus membrane. Its subcellular location is the endosome membrane. It catalyses the reaction Exonucleolytic cleavage in the 5'- to 3'-direction to yield nucleoside 3'-phosphates.. The enzyme catalyses a 5'-end 5'-dephospho-ribonucleotidyl-ribonucleotide-RNA + H2O = a ribonucleoside 3'-phosphate + a 5'-end dephospho-ribonucleoside-RNA + H(+). It carries out the reaction a ribonucleoside 3'-phosphate-2'-3'-cyclophospho-GMP + H2O = a ribonucleoside 3'-phosphate + 2',3'-cyclophospho-GMP + H(+). The catalysed reaction is a 5'-end 5'-dephospho-2'-deoxyribonucleotidyl-2'-deoxyribonucleotide in single-stranded DNA + H2O = a 5'-end dephospho-2'-deoxyribonucleoside in single-stranded DNA + a 2'-deoxyribonucleoside 3'-phosphate + H(+). It catalyses the reaction a 5'-end 5'-phospho-2'-deoxyribonucleotide in single-stranded DNA + H2O = a 5'-end 5'-dephospho-2'-deoxyribonucleotide in single-stranded DNA + phosphate. The enzyme catalyses a 3-lyso-sn-glycero-1-phospho-(3'-acyl-1'-sn-glycerol) + a 1-acyl-sn-glycerol = a 3-acyl-sn-glycero-1-phospho-(3'-acyl-1'-sn-glycerol) + glycerol. It carries out the reaction 3-lyso-sn-glycero-1-phospho-(3'-(9Z-octadecenoyl)-1'-sn-glycerol) + 1-(9Z-octadecenoyl)-sn-glycerol = 3-(9Z-octadecenoyl)-sn-glycero-1-phospho-(3'-(9Z-octadecenoyl)-1'-sn-glycerol) + glycerol. Its function is as follows. 5'-&gt;3' exonuclease that hydrolyzes the phosphodiester bond of single-stranded DNA (ssDNA) and RNA molecules to form nucleoside 3'-monophosphates and 5'-end 5'-hydroxy deoxyribonucleotide/ribonucleotide fragments. Partially redundant with PLD4, can cleave all four nucleotides displaying higher efficiency for ssDNA and RNA fragments initiated with uridine and guanosine residues and lower efficiency for cytidine-initiated substrates. As a result, it does not always degrade polynucleotides to the single nucleotide level, it can stall at specific sites sparing certain fragments from exonucleolytic degradation. Processes self and pathogenic ssDNA and RNA molecules that reach the endolysosomal compartment via phagocytosis or autophagy and may serve as 'danger' signals for recognition by innate immune receptors such as toll-like receptors (TLRs). Degrades mitochondrial CpG-rich ssDNA fragments to prevent TLR9 activation and autoinflammatory response, but it can cleave viral RNA to generate ligands for TLR7 activation and initiate antiviral immune responses. In plasmacytoid dendritic cells, it cooperates with endonuclease RNASET2 to release 2',3'-cyclic guanosine monophosphate (2',3'-cGMP), a potent stimulatory ligand for TLR7. Produces 2',3'-cGMPs and cytidine-rich RNA fragments that occupy TLR7 ligand-binding pockets and trigger a signaling-competent state. Can exert polynucleotide phosphatase activity toward 5'-phosphorylated ssDNA substrates although at a slow rate. Transphosphatidylase that catalyzes the exchange with R to S stereo-inversion of the glycerol moiety between (S,R)-lysophosphatidylglycerol (LPG) and monoacylglycerol (MAG) substrates to yield (S,S)-bis(monoacylglycero)phosphate (BMP). Can synthesize a variety of (S,S)-BMPs representing the main phospholipid constituent of lysosomal intralumenal vesicle (ILV) membranes that bind acid hydrolases for lipid degradation. Regulates the homeostasis and interorganellar communication of the endolysosomal system with an overall impact on cellular removal of dysfunctional organelles via autophagy as well as proper protein and lipid turnover. May play a role in myotube formation in response to ER stress. The polypeptide is 5'-3' exonuclease PLD3 (PLD3) (Pongo abelii (Sumatran orangutan)).